The following is a 110-amino-acid chain: UPF0122 protein lmo1802 (110 aa).

The protein belongs to the UPF0122 family.

Might take part in the signal recognition particle (SRP) pathway. This is inferred from the conservation of its genetic proximity to ftsY/ffh. May be a regulatory protein. The chain is UPF0122 protein lmo1802 from Listeria monocytogenes serovar 1/2a (strain ATCC BAA-679 / EGD-e).